A 451-amino-acid polypeptide reads, in one-letter code: Bifunctional protein GlmU (451 aa).

Positions Met1–Lys232 are pyrophosphorylase. UDP-N-acetyl-alpha-D-glucosamine is bound by residues Leu11–Gly14, Lys25, Gln78, and Gly83–Thr84. Asp108 provides a ligand contact to Mg(2+). The UDP-N-acetyl-alpha-D-glucosamine site is built by Gly144, Glu158, Asn173, and Asn230. Asn230 provides a ligand contact to Mg(2+). The tract at residues Ala233 to Ala253 is linker. An N-acetyltransferase region spans residues Gly254–Lys451. UDP-N-acetyl-alpha-D-glucosamine contacts are provided by Arg319 and Lys337. His349 acts as the Proton acceptor in catalysis. Tyr352 and Asn363 together coordinate UDP-N-acetyl-alpha-D-glucosamine. Residues Ala366, Asn372–Tyr373, Ser409, and Arg426 each bind acetyl-CoA.

In the N-terminal section; belongs to the N-acetylglucosamine-1-phosphate uridyltransferase family. The protein in the C-terminal section; belongs to the transferase hexapeptide repeat family. In terms of assembly, homotrimer. The cofactor is Mg(2+).

It localises to the cytoplasm. It catalyses the reaction alpha-D-glucosamine 1-phosphate + acetyl-CoA = N-acetyl-alpha-D-glucosamine 1-phosphate + CoA + H(+). The enzyme catalyses N-acetyl-alpha-D-glucosamine 1-phosphate + UTP + H(+) = UDP-N-acetyl-alpha-D-glucosamine + diphosphate. Its pathway is nucleotide-sugar biosynthesis; UDP-N-acetyl-alpha-D-glucosamine biosynthesis; N-acetyl-alpha-D-glucosamine 1-phosphate from alpha-D-glucosamine 6-phosphate (route II): step 2/2. It functions in the pathway nucleotide-sugar biosynthesis; UDP-N-acetyl-alpha-D-glucosamine biosynthesis; UDP-N-acetyl-alpha-D-glucosamine from N-acetyl-alpha-D-glucosamine 1-phosphate: step 1/1. It participates in bacterial outer membrane biogenesis; LPS lipid A biosynthesis. Its function is as follows. Catalyzes the last two sequential reactions in the de novo biosynthetic pathway for UDP-N-acetylglucosamine (UDP-GlcNAc). The C-terminal domain catalyzes the transfer of acetyl group from acetyl coenzyme A to glucosamine-1-phosphate (GlcN-1-P) to produce N-acetylglucosamine-1-phosphate (GlcNAc-1-P), which is converted into UDP-GlcNAc by the transfer of uridine 5-monophosphate (from uridine 5-triphosphate), a reaction catalyzed by the N-terminal domain. The protein is Bifunctional protein GlmU of Bradyrhizobium diazoefficiens (strain JCM 10833 / BCRC 13528 / IAM 13628 / NBRC 14792 / USDA 110).